Consider the following 614-residue polypeptide: UvrABC system protein C (614 aa).

A GIY-YIG domain is found at 25 to 103 (SVPGVYKMFG…IKSLKPKYNI (79 aa)). A UVR domain is found at 214 to 249 (KEIQCELFEMMCRFSNNQDYESAIVCRDRLHALKSM).

The protein belongs to the UvrC family. Interacts with UvrB in an incision complex.

The protein localises to the cytoplasm. Its function is as follows. The UvrABC repair system catalyzes the recognition and processing of DNA lesions. UvrC both incises the 5' and 3' sides of the lesion. The N-terminal half is responsible for the 3' incision and the C-terminal half is responsible for the 5' incision. This Anaplasma phagocytophilum (strain HZ) protein is UvrABC system protein C.